The chain runs to 149 residues: Transcriptional repressor NrdR (149 aa).

A zinc finger spans residues 3 to 34 (CPFCAMEETKVIDSRLVSDGYQVRRRRECGYC). An ATP-cone domain is found at 49–139 (PKIIKNDGSR…VYLSFDDINQ (91 aa)).

It belongs to the NrdR family. It depends on Zn(2+) as a cofactor.

In terms of biological role, negatively regulates transcription of bacterial ribonucleotide reductase nrd genes and operons by binding to NrdR-boxes. This is Transcriptional repressor NrdR from Histophilus somni (strain 129Pt) (Haemophilus somnus).